The following is a 133-amino-acid chain: Sec-independent protein translocase protein TatB (133 aa).

A helical transmembrane segment spans residues 1-21; it reads MFDIGFWELVLIAIVALVVLG. Residues 67-133 are disordered; sequence EQMGMQNLSP…ASQPAEKKAE (67 aa). The span at 70-84 shows a compositional bias: polar residues; that stretch reads GMQNLSPELQKSVES. Residues 97-116 show a composition bias toward low complexity; it reads AATPSSEASSTSSNPSSATE.

This sequence belongs to the TatB family. In terms of assembly, the Tat system comprises two distinct complexes: a TatABC complex, containing multiple copies of TatA, TatB and TatC subunits, and a separate TatA complex, containing only TatA subunits. Substrates initially bind to the TatABC complex, which probably triggers association of the separate TatA complex to form the active translocon.

The protein localises to the cell inner membrane. Functionally, part of the twin-arginine translocation (Tat) system that transports large folded proteins containing a characteristic twin-arginine motif in their signal peptide across membranes. Together with TatC, TatB is part of a receptor directly interacting with Tat signal peptides. TatB may form an oligomeric binding site that transiently accommodates folded Tat precursor proteins before their translocation. In Vibrio cholerae serotype O1 (strain ATCC 39315 / El Tor Inaba N16961), this protein is Sec-independent protein translocase protein TatB.